A 310-amino-acid chain; its full sequence is N-acetyl-gamma-glutamyl-phosphate reductase (310 aa).

Cys-117 is a catalytic residue.

This sequence belongs to the NAGSA dehydrogenase family. Type 2 subfamily.

The protein resides in the cytoplasm. It catalyses the reaction N-acetyl-L-glutamate 5-semialdehyde + phosphate + NADP(+) = N-acetyl-L-glutamyl 5-phosphate + NADPH + H(+). It functions in the pathway amino-acid biosynthesis; L-arginine biosynthesis; N(2)-acetyl-L-ornithine from L-glutamate: step 3/4. Its function is as follows. Catalyzes the NADPH-dependent reduction of N-acetyl-5-glutamyl phosphate to yield N-acetyl-L-glutamate 5-semialdehyde. In Rhizobium meliloti (strain 1021) (Ensifer meliloti), this protein is N-acetyl-gamma-glutamyl-phosphate reductase.